Reading from the N-terminus, the 127-residue chain is Large ribosomal subunit protein bL12 (127 aa).

The protein belongs to the bacterial ribosomal protein bL12 family. In terms of assembly, homodimer. Part of the ribosomal stalk of the 50S ribosomal subunit. Forms a multimeric L10(L12)X complex, where L10 forms an elongated spine to which 2 to 4 L12 dimers bind in a sequential fashion. Binds GTP-bound translation factors.

Forms part of the ribosomal stalk which helps the ribosome interact with GTP-bound translation factors. Is thus essential for accurate translation. The chain is Large ribosomal subunit protein bL12 from Streptomyces griseus subsp. griseus (strain JCM 4626 / CBS 651.72 / NBRC 13350 / KCC S-0626 / ISP 5235).